Reading from the N-terminus, the 476-residue chain is Adenosylhomocysteinase (476 aa).

3 residues coordinate substrate: threonine 61, aspartate 140, and glutamate 200. An NAD(+)-binding site is contributed by 201–203 (TTT). Residues lysine 230 and aspartate 234 each coordinate substrate. NAD(+) contacts are provided by residues asparagine 235, 264–269 (GYGDVG), glutamate 287, asparagine 322, 343–345 (IGH), and asparagine 389.

Belongs to the adenosylhomocysteinase family. NAD(+) is required as a cofactor.

The protein localises to the cytoplasm. The enzyme catalyses S-adenosyl-L-homocysteine + H2O = L-homocysteine + adenosine. The protein operates within amino-acid biosynthesis; L-homocysteine biosynthesis; L-homocysteine from S-adenosyl-L-homocysteine: step 1/1. In terms of biological role, may play a key role in the regulation of the intracellular concentration of adenosylhomocysteine. This Acidovorax sp. (strain JS42) protein is Adenosylhomocysteinase.